The primary structure comprises 81 residues: Cytochrome b559 subunit alpha (81 aa).

The chain crosses the membrane as a helical span at residues 21 to 35 (VIHALTIPALFLAGW). Position 23 (His-23) interacts with heme.

The protein belongs to the PsbE/PsbF family. In terms of assembly, heterodimer of an alpha subunit and a beta subunit. PSII is composed of 1 copy each of membrane proteins PsbA, PsbB, PsbC, PsbD, PsbE, PsbF, PsbH, PsbI, PsbJ, PsbK, PsbL, PsbM, PsbT, PsbX, PsbY, PsbZ, Psb30/Ycf12, peripheral proteins PsbO, CyanoQ (PsbQ), PsbU, PsbV and a large number of cofactors. It forms dimeric complexes. It depends on heme b as a cofactor.

The protein resides in the cellular thylakoid membrane. This b-type cytochrome is tightly associated with the reaction center of photosystem II (PSII). PSII is a light-driven water:plastoquinone oxidoreductase that uses light energy to abstract electrons from H(2)O, generating O(2) and a proton gradient subsequently used for ATP formation. It consists of a core antenna complex that captures photons, and an electron transfer chain that converts photonic excitation into a charge separation. This is Cytochrome b559 subunit alpha from Synechococcus sp. (strain JA-3-3Ab) (Cyanobacteria bacterium Yellowstone A-Prime).